The chain runs to 394 residues: Elongation factor Tu 1 (394 aa).

One can recognise a tr-type G domain in the interval 10 to 204 (KPHVNVGTIG…ALDSYIPQPE (195 aa)). The tract at residues 19–26 (GHVDHGKT) is G1. Position 19 to 26 (19 to 26 (GHVDHGKT)) interacts with GTP. Residue Thr-26 participates in Mg(2+) binding. Residues 60-64 (GITIN) are G2. The tract at residues 81–84 (DCPG) is G3. GTP is bound by residues 81–85 (DCPGH) and 136–139 (NKCD). Positions 136 to 139 (NKCD) are G4. The tract at residues 174 to 176 (SAL) is G5.

The protein belongs to the TRAFAC class translation factor GTPase superfamily. Classic translation factor GTPase family. EF-Tu/EF-1A subfamily. As to quaternary structure, monomer.

The protein localises to the cytoplasm. The catalysed reaction is GTP + H2O = GDP + phosphate + H(+). In terms of biological role, GTP hydrolase that promotes the GTP-dependent binding of aminoacyl-tRNA to the A-site of ribosomes during protein biosynthesis. The protein is Elongation factor Tu 1 of Yersinia pestis bv. Antiqua (strain Nepal516).